The primary structure comprises 290 residues: 4-hydroxybenzoate octaprenyltransferase (290 aa).

A run of 8 helical transmembrane segments spans residues 23 to 43 (IGALLLLWPTLWALWVATPGV), 46 to 66 (LWIMAVFVAGVWLMRAAGCVV), 99 to 119 (LFVVLVLISFLLVLTLNTMTI), 141 to 161 (LPQVVLGAAFGWSIPMAFAAV), 163 to 183 (ESVPLSCWLMFLANILWAVAY), 213 to 233 (LIIGILQIGVLALMAIIGELN), 234 to 254 (GLGWGYYWSIVVAGALFVYQQ), and 268 to 288 (AFMNNNYVGLVLFLGLAMSYW).

This sequence belongs to the UbiA prenyltransferase family. Mg(2+) is required as a cofactor.

Its subcellular location is the cell inner membrane. It carries out the reaction all-trans-octaprenyl diphosphate + 4-hydroxybenzoate = 4-hydroxy-3-(all-trans-octaprenyl)benzoate + diphosphate. The protein operates within cofactor biosynthesis; ubiquinone biosynthesis. Catalyzes the prenylation of para-hydroxybenzoate (PHB) with an all-trans polyprenyl group. Mediates the second step in the final reaction sequence of ubiquinone-8 (UQ-8) biosynthesis, which is the condensation of the polyisoprenoid side chain with PHB, generating the first membrane-bound Q intermediate 3-octaprenyl-4-hydroxybenzoate. The chain is 4-hydroxybenzoate octaprenyltransferase from Shigella flexneri.